Reading from the N-terminus, the 701-residue chain is Polyribonucleotide nucleotidyltransferase (701 aa).

Mg(2+) contacts are provided by Asp-487 and Asp-493. A KH domain is found at 554-613 (PTMLQMKIDSDKIRDVIGKGGATIRGICEETKASIDIEDDGSVKIYGETKEAAEAAKLRV). In terms of domain architecture, S1 motif spans 623–691 (GKIYVGKVER…NRGRIKLSIK (69 aa)).

Belongs to the polyribonucleotide nucleotidyltransferase family. Component of the RNA degradosome, which is a multiprotein complex involved in RNA processing and mRNA degradation. Mg(2+) serves as cofactor.

The protein resides in the cytoplasm. It carries out the reaction RNA(n+1) + phosphate = RNA(n) + a ribonucleoside 5'-diphosphate. Functionally, involved in mRNA degradation. Catalyzes the phosphorolysis of single-stranded polyribonucleotides processively in the 3'- to 5'-direction. The chain is Polyribonucleotide nucleotidyltransferase from Pseudomonas aeruginosa (strain LESB58).